The following is a 421-amino-acid chain: uncharacterized protein (421 aa).

The residue at position 249 (K249) is an N6-(pyridoxal phosphate)lysine.

Belongs to the class-I pyridoxal-phosphate-dependent aminotransferase family. Requires pyridoxal 5'-phosphate as cofactor.

Its subcellular location is the cytoplasm. This is an uncharacterized protein from Schizosaccharomyces pombe (strain 972 / ATCC 24843) (Fission yeast).